Consider the following 225-residue polypeptide: Ribose-5-phosphate isomerase A (225 aa).

Substrate-binding positions include 32–35, 85–88, and 98–101; these read TGST, DGAD, and KGGG. The active-site Proton acceptor is glutamate 107. Lysine 125 is a substrate binding site.

The protein belongs to the ribose 5-phosphate isomerase family. As to quaternary structure, homodimer.

The enzyme catalyses aldehydo-D-ribose 5-phosphate = D-ribulose 5-phosphate. It functions in the pathway carbohydrate degradation; pentose phosphate pathway; D-ribose 5-phosphate from D-ribulose 5-phosphate (non-oxidative stage): step 1/1. Its function is as follows. Catalyzes the reversible conversion of ribose-5-phosphate to ribulose 5-phosphate. The polypeptide is Ribose-5-phosphate isomerase A (Marinobacter nauticus (strain ATCC 700491 / DSM 11845 / VT8) (Marinobacter aquaeolei)).